The primary structure comprises 683 residues: Synaptic vesicle glycoprotein 2B (683 aa).

Residues methionine 1–glutamate 42 form a disordered region. The Cytoplasmic segment spans residues methionine 1–glutamine 108. Position 33 is a phosphoserine (serine 33). Residue threonine 36 is modified to Phosphothreonine. A helical transmembrane segment spans residues tryptophan 109–valine 129. The Extracellular portion of the chain corresponds to serine 130–glycine 148. The chain crosses the membrane as a helical span at residues methionine 149–alanine 169. The Cytoplasmic segment spans residues aspartate 170 to leucine 182. The chain crosses the membrane as a helical span at residues alanine 183 to phenylalanine 203. The Extracellular portion of the chain corresponds to cysteine 204–arginine 205. A helical transmembrane segment spans residues leucine 206–phenylalanine 226. Topologically, residues leucine 227–serine 237 are cytoplasmic. The chain crosses the membrane as a helical span at residues tryptophan 238–isoleucine 258. Topologically, residues proline 259–arginine 277 are extracellular. Residues valine 278 to proline 298 form a helical membrane-spanning segment. Topologically, residues glutamate 299–threonine 390 are cytoplasmic. A helical membrane pass occupies residues leucine 391–phenylalanine 411. Residues proline 412–aspartate 535 are Extracellular-facing. The residue at position 423 (tyrosine 423) is a Phosphotyrosine. Residues asparagine 441, asparagine 491, and asparagine 516 are each glycosylated (N-linked (GlcNAc...) asparagine). Residues phenylalanine 536–serine 556 traverse the membrane as a helical segment. The Cytoplasmic segment spans residues alanine 557 to arginine 565. Residues leucine 566–glycine 586 form a helical membrane-spanning segment. The Extracellular portion of the chain corresponds to asparagine 587–methionine 592. Residues isoleucine 593–isoleucine 613 traverse the membrane as a helical segment. Topologically, residues threonine 614–alanine 626 are cytoplasmic. Residues phenylalanine 627–valine 649 traverse the membrane as a helical segment. The Extracellular portion of the chain corresponds to glycine 650–lysine 653. The helical transmembrane segment at valine 654–leucine 672 threads the bilayer. At arginine 673–methionine 683 the chain is on the cytoplasmic side.

Belongs to the major facilitator superfamily. In terms of assembly, interacts with SYT1 in a calcium-independent manner. Forms a complex with SYT1, syntaxin-1 and SNAP25. As to quaternary structure, (Microbial infection) Interacts with C.botulinum neurotoxin type A2 (BoNT/A, botA). Interaction is improved by glycosylation of SV2. In terms of processing, N-glycosylated. The N-terminal cytoplasmic domain is phosphorylated by CK1.

The protein localises to the cytoplasmic vesicle. The protein resides in the secretory vesicle. It is found in the synaptic vesicle membrane. Its subcellular location is the acrosome. Its function is as follows. Probably plays a role in the control of regulated secretion in neural and endocrine cells. In terms of biological role, (Microbial infection) Receptor for the C.botulinum neurotoxin type A2 (BoNT/A, botA); glycosylation is not essential but enhances the interaction. Probably also serves as a receptor for the closely related C.botulinum neurotoxin type A1. In Homo sapiens (Human), this protein is Synaptic vesicle glycoprotein 2B (SV2B).